We begin with the raw amino-acid sequence, 706 residues long: Coiled-coil domain-containing protein 177 (706 aa).

Residues 1 to 11 show a composition bias toward acidic residues; sequence MVDPVPEEEKE. Disordered regions lie at residues 1 to 63, 179 to 262, and 268 to 287; these read MVDP…GGRR, ASAL…LREL, and ASARNSCPAGSASSAPNPLG. 2 stretches are compositionally biased toward low complexity: residues 28-49 and 179-209; these read PPDAQGAQQPAASSASASAAAP and ASALSGGSSSSCSSSSSLPASPASRVARRTS. Over residues 210 to 221 the composition is skewed to pro residues; sequence PSPPARSRPPPA. The segment covering 242 to 257 has biased composition (low complexity); the sequence is ALSSESGASSSSYSGE. Phosphoserine is present on serine 310. Positions 360-624 form a coiled coil; the sequence is AAHGQWEQQR…QTRLEKERAQ (265 aa). Disordered regions lie at residues 364-386, 398-425, 448-580, and 651-706; these read QWEQQRVRAEQRREREEREKQRA, VEERRGRRGREEREAARRRQQQCERSEE, DDRL…EREH, and ERSE…LDRK. Residues 368-386 show a composition bias toward basic and acidic residues; that stretch reads QRVRAEQRREREEREKQRA. 3 stretches are compositionally biased toward basic and acidic residues: residues 448-529, 548-580, and 651-663; these read DDRL…REGL, QEQRARELRERARREELQGRRAKEAAERKEREH, and ERSEQLSRERRSA. Positions 664–674 are enriched in low complexity; the sequence is LESARSTARAS. The span at 676 to 706 shows a compositional bias: basic and acidic residues; the sequence is HVREKVREETNTRSFDRMVREAQLHASLDRK.

The chain is Coiled-coil domain-containing protein 177 (Ccdc177) from Mus musculus (Mouse).